The following is a 335-amino-acid chain: Homeobox protein unc-39 (335 aa).

Disordered regions lie at residues 27–56 (FTSS…GGPP) and 269–294 (RRQR…NGGS). Residues 28-41 (TSSSNSNTSNSSTS) show a composition bias toward low complexity. Residues 42–53 (PSHISDQFSSSG) are compositionally biased toward polar residues. Positions 225–277 (KDSSRKFLKQFFRNVSEYPTQEQKREISRATGLKIVQISNWFKNRRQRDKSNN) form a DNA-binding region, homeobox. Residues 276–294 (NNSAKCSPPSSSSSTNGGS) show a composition bias toward low complexity.

Belongs to the SIX/Sine oculis homeobox family.

Its subcellular location is the nucleus. Functionally, probable transcription factor required for differentiation and migration of neuronal cells, such as RID and CAN neurons. Specifically, plays a role in the terminal differentiation of RID peptidergic neurons. Also required for CAN neuron axon guidance. The sequence is that of Homeobox protein unc-39 from Caenorhabditis elegans.